Reading from the N-terminus, the 255-residue chain is 5-oxoprolinase subunit A 1 (255 aa).

This sequence belongs to the LamB/PxpA family. As to quaternary structure, forms a complex composed of PxpA, PxpB and PxpC.

It catalyses the reaction 5-oxo-L-proline + ATP + 2 H2O = L-glutamate + ADP + phosphate + H(+). Catalyzes the cleavage of 5-oxoproline to form L-glutamate coupled to the hydrolysis of ATP to ADP and inorganic phosphate. This chain is 5-oxoprolinase subunit A 1, found in Bradyrhizobium diazoefficiens (strain JCM 10833 / BCRC 13528 / IAM 13628 / NBRC 14792 / USDA 110).